The sequence spans 251 residues: Endoglucanase CX (251 aa).

The protein belongs to the glycosyl hydrolase 9 (cellulase E) family.

It carries out the reaction Endohydrolysis of (1-&gt;4)-beta-D-glucosidic linkages in cellulose, lichenin and cereal beta-D-glucans.. Functionally, degrades carboxymethylcellulose (CMC). This Prunus persica (Peach) protein is Endoglucanase CX.